Consider the following 840-residue polypeptide: Exocyst complex component 7 (840 aa).

The segment at 1–112 (MSAPPRLSAR…ATSTTSPFSY (112 aa)) is disordered. Positions 19 to 31 (SNAPSPTSPTGLK) are enriched in polar residues. 2 stretches are compositionally biased toward low complexity: residues 50-73 (KSSV…TLPK) and 83-111 (QQQQ…SPFS). Residues 193 to 227 (KNNATSELTEQDDQLENDKRDLQFIKEQLEKNNSM) are a coiled coil. The tract at residues 601-638 (QDNNNSNSNSNAPSSTSSNSKSSSSSSSSSSSNSASST) is disordered. Positions 603–637 (NNNSNSNSNAPSSTSSNSKSSSSSSSSSSSNSASS) are enriched in low complexity.

The protein belongs to the EXO70 family. The exocyst complex is composed of sec3/exoc1, sec5/exoc2, sec6/exoc3, sec8/exoc4, sec10/exoc5, sec15/exoc6, exo70/exoc7 and exo84/exoc8.

It is found in the cytoplasm. It localises to the cytosol. Its subcellular location is the cell membrane. The protein resides in the midbody. The protein localises to the midbody ring. In terms of biological role, component of the exocyst complex involved in the docking of exocytic vesicles with fusion sites on the plasma membrane. In Dictyostelium discoideum (Social amoeba), this protein is Exocyst complex component 7 (exoc7).